Here is a 320-residue protein sequence, read N- to C-terminus: tRNA U34 carboxymethyltransferase (320 aa).

Carboxy-S-adenosyl-L-methionine-binding positions include Lys89, Trp103, Lys108, Gly127, 177 to 178, Met193, Tyr197, and Arg312; that span reads LE.

It belongs to the class I-like SAM-binding methyltransferase superfamily. CmoB family. As to quaternary structure, homotetramer.

The catalysed reaction is carboxy-S-adenosyl-L-methionine + 5-hydroxyuridine(34) in tRNA = 5-carboxymethoxyuridine(34) in tRNA + S-adenosyl-L-homocysteine + H(+). In terms of biological role, catalyzes carboxymethyl transfer from carboxy-S-adenosyl-L-methionine (Cx-SAM) to 5-hydroxyuridine (ho5U) to form 5-carboxymethoxyuridine (cmo5U) at position 34 in tRNAs. In Stutzerimonas stutzeri (strain A1501) (Pseudomonas stutzeri), this protein is tRNA U34 carboxymethyltransferase.